A 374-amino-acid polypeptide reads, in one-letter code: Probable tuliposide A-converting enzyme b6, amyloplastic (374 aa).

The N-terminal 68 residues, methionine 1–threonine 68, are a transit peptide targeting the amyloplast. Serine 226 functions as the Acyl-ester intermediate in the catalytic mechanism. Catalysis depends on charge relay system residues aspartate 316 and histidine 348.

This sequence belongs to the AB hydrolase superfamily. In terms of assembly, homodimer.

It is found in the plastid. The protein resides in the amyloplast. It carries out the reaction 6-tuliposide A = tulipalin A + D-glucose. Functionally, lactone-forming carboxylesterases, specifically catalyzing intramolecular transesterification, but not hydrolysis. Involved in the biosynthesis of tulipalins, defensive chemicals that show antimicrobial activities against a broad range of strains of bacteria and fungi. Substrates are 6-tuliposide A &gt; 6-tuliposide B. This is Probable tuliposide A-converting enzyme b6, amyloplastic (TCEA-B6) from Tulipa gesneriana (Garden tulip).